The following is a 194-amino-acid chain: Holliday junction branch migration complex subunit RuvA (194 aa).

The interval 1-63 (MFEYLYGTVE…EDTYKLIGFL (63 aa)) is domain I. The segment at 64 to 142 (DERDRKIFEL…NLTYTEEETV (79 aa)) is domain II. Residues 143-147 (SMDML) are flexible linker. The interval 147 to 194 (LEDLVLALEGLGYNKKEIDKTLEKIDLNKFSSLEDAIKGILKNMRIGD) is domain III.

This sequence belongs to the RuvA family. As to quaternary structure, homotetramer. Forms an RuvA(8)-RuvB(12)-Holliday junction (HJ) complex. HJ DNA is sandwiched between 2 RuvA tetramers; dsDNA enters through RuvA and exits via RuvB. An RuvB hexamer assembles on each DNA strand where it exits the tetramer. Each RuvB hexamer is contacted by two RuvA subunits (via domain III) on 2 adjacent RuvB subunits; this complex drives branch migration. In the full resolvosome a probable DNA-RuvA(4)-RuvB(12)-RuvC(2) complex forms which resolves the HJ.

The protein resides in the cytoplasm. In terms of biological role, the RuvA-RuvB-RuvC complex processes Holliday junction (HJ) DNA during genetic recombination and DNA repair, while the RuvA-RuvB complex plays an important role in the rescue of blocked DNA replication forks via replication fork reversal (RFR). RuvA specifically binds to HJ cruciform DNA, conferring on it an open structure. The RuvB hexamer acts as an ATP-dependent pump, pulling dsDNA into and through the RuvAB complex. HJ branch migration allows RuvC to scan DNA until it finds its consensus sequence, where it cleaves and resolves the cruciform DNA. In Fusobacterium nucleatum subsp. nucleatum (strain ATCC 25586 / DSM 15643 / BCRC 10681 / CIP 101130 / JCM 8532 / KCTC 2640 / LMG 13131 / VPI 4355), this protein is Holliday junction branch migration complex subunit RuvA.